The sequence spans 554 residues: CTP synthase (554 aa).

Residues 1–270 (MTKFVFVTGG…DGLICDKLRL (270 aa)) form an amidoligase domain region. S13 serves as a coordination point for CTP. S13 lines the UTP pocket. ATP contacts are provided by residues 14–19 (SLGKGI) and D71. D71 and E144 together coordinate Mg(2+). CTP contacts are provided by residues 151–153 (DIE), 191–196 (KTKPTQ), and K227. UTP-binding positions include 191–196 (KTKPTQ) and K227. In terms of domain architecture, Glutamine amidotransferase type-1 spans 295-548 (TVAMVGKYVD…IAAAKARHQA (254 aa)). G357 is a binding site for L-glutamine. Catalysis depends on C384, which acts as the Nucleophile; for glutamine hydrolysis. L-glutamine-binding positions include 385-388 (LGMQ), E408, and R474. Active-site residues include H521 and E523.

It belongs to the CTP synthase family. In terms of assembly, homotetramer.

It catalyses the reaction UTP + L-glutamine + ATP + H2O = CTP + L-glutamate + ADP + phosphate + 2 H(+). The enzyme catalyses L-glutamine + H2O = L-glutamate + NH4(+). It carries out the reaction UTP + NH4(+) + ATP = CTP + ADP + phosphate + 2 H(+). It participates in pyrimidine metabolism; CTP biosynthesis via de novo pathway; CTP from UDP: step 2/2. Its activity is regulated as follows. Allosterically activated by GTP, when glutamine is the substrate; GTP has no effect on the reaction when ammonia is the substrate. The allosteric effector GTP functions by stabilizing the protein conformation that binds the tetrahedral intermediate(s) formed during glutamine hydrolysis. Inhibited by the product CTP, via allosteric rather than competitive inhibition. In terms of biological role, catalyzes the ATP-dependent amination of UTP to CTP with either L-glutamine or ammonia as the source of nitrogen. Regulates intracellular CTP levels through interactions with the four ribonucleotide triphosphates. This Verminephrobacter eiseniae (strain EF01-2) protein is CTP synthase.